The following is a 399-amino-acid chain: NADH-quinone oxidoreductase subunit D 2 (399 aa).

Positions methionine 1 to leucine 20 are disordered. The span at serine 9 to leucine 20 shows a compositional bias: low complexity.

The protein belongs to the complex I 49 kDa subunit family. NDH-1 is composed of 14 different subunits. Subunits NuoB, C, D, E, F, and G constitute the peripheral sector of the complex.

Its subcellular location is the cell inner membrane. The catalysed reaction is a quinone + NADH + 5 H(+)(in) = a quinol + NAD(+) + 4 H(+)(out). Its function is as follows. NDH-1 shuttles electrons from NADH, via FMN and iron-sulfur (Fe-S) centers, to quinones in the respiratory chain. The immediate electron acceptor for the enzyme in this species is believed to be ubiquinone. Couples the redox reaction to proton translocation (for every two electrons transferred, four hydrogen ions are translocated across the cytoplasmic membrane), and thus conserves the redox energy in a proton gradient. The protein is NADH-quinone oxidoreductase subunit D 2 of Opitutus terrae (strain DSM 11246 / JCM 15787 / PB90-1).